The primary structure comprises 145 residues: Protein ImpA (145 aa).

Residues S64 and K101 each act as for autocatalytic cleavage activity in the active site.

It belongs to the peptidase S24 family.

Involved in UV protection and mutation. The chain is Protein ImpA from Escherichia coli.